Here is a 492-residue protein sequence, read N- to C-terminus: Glutamyl-tRNA(Gln) amidotransferase subunit A, mitochondrial (492 aa).

Active-site charge relay system residues include Lys-78 and Ser-159. Residue Ser-183 is the Acyl-ester intermediate of the active site.

It belongs to the amidase family. GatA subfamily. Subunit of the heterotrimeric GatCAB amidotransferase (AdT) complex, composed of A, B and C subunits.

It localises to the mitochondrion. The catalysed reaction is L-glutamyl-tRNA(Gln) + L-glutamine + ATP + H2O = L-glutaminyl-tRNA(Gln) + L-glutamate + ADP + phosphate + H(+). Allows the formation of correctly charged Gln-tRNA(Gln) through the transamidation of misacylated Glu-tRNA(Gln) in the mitochondria. The reaction takes place in the presence of glutamine and ATP through an activated gamma-phospho-Glu-tRNA(Gln). This is Glutamyl-tRNA(Gln) amidotransferase subunit A, mitochondrial from Anopheles gambiae (African malaria mosquito).